The sequence spans 431 residues: Glutamate--tRNA ligase 1 (431 aa).

Residues 6-16 (PSPTGDMHIGN) carry the 'HIGH' region motif. The 'KMSKS' region motif lies at 235–239 (KMSKR). Position 238 (Lys-238) interacts with ATP.

The protein belongs to the class-I aminoacyl-tRNA synthetase family. Glutamate--tRNA ligase type 1 subfamily. Monomer.

It is found in the cytoplasm. It carries out the reaction tRNA(Glu) + L-glutamate + ATP = L-glutamyl-tRNA(Glu) + AMP + diphosphate. In terms of biological role, catalyzes the attachment of glutamate to tRNA(Glu) in a two-step reaction: glutamate is first activated by ATP to form Glu-AMP and then transferred to the acceptor end of tRNA(Glu). This is Glutamate--tRNA ligase 1 from Campylobacter concisus (strain 13826).